We begin with the raw amino-acid sequence, 220 residues long: uncharacterized protein (220 aa).

Transmembrane regions (helical) follow at residues 25–45, 50–70, 74–94, 105–125, 135–155, 158–178, and 196–216; these read YFLL…SMSL, PGLI…YKLS, LGIL…GPIL, IVVL…AYVL, SGTI…SFFF, PMLY…GILY, and VSIF…FSIL.

Belongs to the BI1 family.

The protein resides in the cell membrane. This is an uncharacterized protein from Pasteurella multocida (strain Pm70).